The primary structure comprises 68 residues: Beta-defensin 1 (68 aa).

The N-terminal stretch at 1-21 (MRTSYLLLFTLCLLMSEMASG) is a signal peptide. Positions 22–32 (DNFLTGLGHRS) are excised as a propeptide. Disulfide bonds link C37–C66, C44–C59, and C49–C67.

The protein belongs to the beta-defensin family. Monomer. Homodimer.

It localises to the secreted. It is found in the membrane. Functionally, has bactericidal activity. May act as a ligand for C-C chemokine receptor CCR6. Positively regulates the sperm motility and bactericidal activity in a CCR6-dependent manner. Binds to CCR6 and triggers Ca2+ mobilization in the sperm which is important for its motility. In Presbytis melalophos (Mitred leaf monkey), this protein is Beta-defensin 1 (DEFB1).